Here is a 439-residue protein sequence, read N- to C-terminus: 23S rRNA (uracil(1939)-C(5))-methyltransferase RlmD (439 aa).

Residues 10 to 69 (KTQLNTRHQAVQVERLDHHGAGIAYLKKKPLFIDGALPGEEVVTQLVEEKSKFARGKLIK) enclose the TRAM domain. [4Fe-4S] cluster-binding residues include cysteine 82, cysteine 88, cysteine 91, and cysteine 169. Positions 272, 301, 306, 322, 349, and 370 each coordinate S-adenosyl-L-methionine. Cysteine 396 acts as the Nucleophile in catalysis.

The protein belongs to the class I-like SAM-binding methyltransferase superfamily. RNA M5U methyltransferase family. RlmD subfamily.

It carries out the reaction uridine(1939) in 23S rRNA + S-adenosyl-L-methionine = 5-methyluridine(1939) in 23S rRNA + S-adenosyl-L-homocysteine + H(+). Functionally, catalyzes the formation of 5-methyl-uridine at position 1939 (m5U1939) in 23S rRNA. The polypeptide is 23S rRNA (uracil(1939)-C(5))-methyltransferase RlmD (Vibrio parahaemolyticus serotype O3:K6 (strain RIMD 2210633)).